We begin with the raw amino-acid sequence, 334 residues long: Nucleoid-associated protein YPN_2714 (334 aa).

The protein belongs to the YejK family.

It is found in the cytoplasm. Its subcellular location is the nucleoid. The sequence is that of Nucleoid-associated protein YPN_2714 from Yersinia pestis bv. Antiqua (strain Nepal516).